The following is a 194-amino-acid chain: Peptidyl-tRNA hydrolase (194 aa).

H22 acts as the Proton acceptor in catalysis. Residues Y67, N69, and N115 each coordinate tRNA.

The protein belongs to the PTH family. As to quaternary structure, monomer.

It is found in the cytoplasm. The catalysed reaction is an N-acyl-L-alpha-aminoacyl-tRNA + H2O = an N-acyl-L-amino acid + a tRNA + H(+). Functionally, hydrolyzes ribosome-free peptidyl-tRNAs (with 1 or more amino acids incorporated), which drop off the ribosome during protein synthesis, or as a result of ribosome stalling. Catalyzes the release of premature peptidyl moieties from peptidyl-tRNA molecules trapped in stalled 50S ribosomal subunits, and thus maintains levels of free tRNAs and 50S ribosomes. In Granulibacter bethesdensis (strain ATCC BAA-1260 / CGDNIH1), this protein is Peptidyl-tRNA hydrolase.